Here is a 274-residue protein sequence, read N- to C-terminus: Bis(5'-nucleosyl)-tetraphosphatase, symmetrical (274 aa).

It belongs to the Ap4A hydrolase family.

The enzyme catalyses P(1),P(4)-bis(5'-adenosyl) tetraphosphate + H2O = 2 ADP + 2 H(+). In terms of biological role, hydrolyzes diadenosine 5',5'''-P1,P4-tetraphosphate to yield ADP. The protein is Bis(5'-nucleosyl)-tetraphosphatase, symmetrical of Shewanella sp. (strain W3-18-1).